The following is a 123-amino-acid chain: Glycine cleavage system H protein (123 aa).

The region spanning 22–104 is the Lipoyl-binding domain; it reads VATVGITSYA…FGAGWLVKVR (83 aa). K63 bears the N6-lipoyllysine mark.

Belongs to the GcvH family. The glycine cleavage system is composed of four proteins: P, T, L and H. The cofactor is (R)-lipoate.

Its function is as follows. The glycine cleavage system catalyzes the degradation of glycine. The H protein shuttles the methylamine group of glycine from the P protein to the T protein. In Clavibacter sepedonicus (Clavibacter michiganensis subsp. sepedonicus), this protein is Glycine cleavage system H protein.